A 108-amino-acid chain; its full sequence is MFSRIAAVSFLALPLLAAATPVLRRGDCNTGPIQCCQSTETAGSAAGSALLGLLGVVVQSVDVVLGLNCSPISVIGVGSGSACDASPVCCENNSVGGIISIGCVPIQL.

The signal sequence occupies residues 1–19 (MFSRIAAVSFLALPLLAAA). Intrachain disulfides connect Cys28-Cys89, Cys35-Cys83, Cys36-Cys69, and Cys90-Cys103. A glycan (N-linked (GlcNAc...) asparagine) is linked at Asn92.

Belongs to the fungal hydrophobin family. As to quaternary structure, self-assembles to form functional amyloid fibrils called rodlets with a diameter of 15-30 nm. Self-assembly into fibrillar rodlets occurs spontaneously at hydrophobic:hydrophilic interfaces and the rodlets further associate laterally to form amphipathic monolayers. Highky expressed in hyphae cultured in liquid medium.

It localises to the secreted. It is found in the cell wall. In terms of biological role, aerial growth, conidiation, and dispersal of filamentous fungi in the environment rely upon a capability of their secreting small amphipathic proteins called hydrophobins (HPBs) with low sequence identity. Class I can self-assemble into an outermost layer of rodlet bundles on aerial cell surfaces, conferring cellular hydrophobicity that supports fungal growth, development and dispersal; whereas Class II form highly ordered films at water-air interfaces through intermolecular interactions but contribute nothing to the rodlet structure. HgfII is a class I hydrophobin that is involved in cell surface hydrophobicity and might play a key role during the growth and development of hyphae cultured in liquid medium. This Grifola frondosa (Maitake) protein is Class I hydrophobin hgfII.